Consider the following 1461-residue polypeptide: Calmodulin-regulated spectrin-associated protein 2 (1461 aa).

The Calponin-homology (CH) domain maps to 211-324 (PGGQKARYRK…FMAELFWWFE (114 aa)). A disordered region spans residues 361–389 (RDSSSSSDFSSRYTRPQTHSSASGGIRRS). 2 stretches are compositionally biased toward low complexity: residues 362-371 (DSSSSSDFSS) and 380-389 (SSASGGIRRS). Phosphoserine occurs at positions 391 and 393. Thr-401 is modified (phosphothreonine). Residues Ser-439, Ser-572, Ser-573, Ser-585, and Ser-647 each carry the phosphoserine modification. Disordered regions lie at residues 573–613 (SPDN…EDSS) and 639–704 (ASNP…GSEL). Phosphothreonine is present on Thr-652. Ser-654 is subject to Phosphoserine. Over residues 654–673 (STKSQPGSSASSSSGVKMTS) the composition is skewed to low complexity. Residues 677–687 (QKFRKLNHTDG) are compositionally biased toward basic and acidic residues. Positions 730–767 (LLASEMVHLRMRLEEKRRAIEAQKKKMEAAFTKQRQKM) form a coiled coil. Over residues 787–826 (REEAAGAEDEKVYTDRAKERESQKMDGQRSKSLADIKESM) the composition is skewed to basic and acidic residues. The disordered stretch occupies residues 787–855 (REEAAGAEDE…QWNLTSPSEE (69 aa)). The residue at position 836 (Ser-836) is a Phosphoserine. The stretch at 861-900 (EILEYTKSIEKLNSSLHFLQQEMQRLSLQQEMLMQMREQQ) forms a coiled coil. Positions 896–1007 (MREQQAWVIS…IQTRSFVCFG (112 aa)) are MBD region. Ser-905 and Ser-910 each carry phosphoserine. 5 disordered regions span residues 921 to 992 (RQAG…RRFS), 1004 to 1044 (VCFG…GEKE), 1069 to 1090 (NEDQLSQPTEPPPKPVFPPTAP), 1102 to 1124 (DLKPPEKADVSVEKLDGESDKEQ), and 1163 to 1321 (KETQ…EYTG). The segment covering 926 to 937 (SSAAAPFSSDSP) has biased composition (low complexity). Positions 943–962 (SPQSSTRKSASFSVKNQRTP) are enriched in polar residues. 3 positions are modified to phosphothreonine: Thr-970, Thr-975, and Thr-977. Ser-981 and Ser-992 each carry phosphoserine. Basic and acidic residues predominate over residues 1011 to 1028 (EPQKEPKQKEEIKKEPSE). The segment covering 1077–1089 (TEPPPKPVFPPTA) has biased composition (pro residues). Composition is skewed to basic and acidic residues over residues 1104–1124 (KPPEKADVSVEKLDGESDKEQ) and 1163–1224 (KETQ…DTVI). Phosphoserine is present on Ser-1120. The stretch at 1138 to 1210 (KDDQKAENDM…REFIRQEYMR (73 aa)) forms a coiled coil. Polar residues predominate over residues 1259–1271 (SSLSLASLNTGDS). Ser-1285, Ser-1291, and Ser-1293 each carry phosphoserine. Over residues 1306-1318 (NASTTSSVASGTE) the composition is skewed to polar residues. One can recognise a CKK domain in the interval 1321 to 1455 (GPKLYKEPSA…QTKRPVTPKK (135 aa)).

Belongs to the CAMSAP1 family. As to quaternary structure, interacts with CAMSAP3. Interacts with KATNA1 and KATNB1; leading to regulate the length of CAMSAP2-decorated microtubule stretches. Interacts with a complex formed by AKAP9 and PDE4DIP isoform 2/MMG8/SMYLE, which recruits CAMSAP2 to the Golgi. Interacts with MAPRE1/EB1.

The protein resides in the cytoplasm. It is found in the cytoskeleton. The protein localises to the golgi apparatus. Its subcellular location is the cilium basal body. Its function is as follows. Key microtubule-organizing protein that specifically binds the minus-end of non-centrosomal microtubules and regulates their dynamics and organization. Specifically recognizes growing microtubule minus-ends and autonomously decorates and stabilizes microtubule lattice formed by microtubule minus-end polymerization. Acts on free microtubule minus-ends that are not capped by microtubule-nucleating proteins or other factors and protects microtubule minus-ends from depolymerization. In addition, it also reduces the velocity of microtubule polymerization. Through the microtubule cytoskeleton, also regulates the organization of cellular organelles including the Golgi and the early endosomes. Essential for the tethering, but not for nucleation of non-centrosomal microtubules at the Golgi: together with Golgi-associated proteins AKAP9 and PDE4DIP, required to tether non-centrosomal minus-end microtubules to the Golgi, an important step for polarized cell movement. Also acts as a regulator of neuronal polarity and development: localizes to non-centrosomal microtubule minus-ends in neurons and stabilizes non-centrosomal microtubules, which is required for neuronal polarity, axon specification and dendritic branch formation. Through the microtubule cytoskeleton, regulates the autophagosome transport. In Mus musculus (Mouse), this protein is Calmodulin-regulated spectrin-associated protein 2.